The chain runs to 408 residues: Protein trichome birefringence-like 14 (408 aa).

A helical; Signal-anchor for type II membrane protein transmembrane segment spans residues 11-31 (GSVSLALIVLILLVIILLVSE). Positions 131–133 (GDS) match the GDS motif motif. Residues 387-401 (DCLHWCLPGIPDTWN) carry the DCXHWCLPGXXDXWN motif motif.

Belongs to the PC-esterase family. TBL subfamily.

The protein localises to the membrane. Functionally, may act as a bridging protein that binds pectin and other cell wall polysaccharides. Probably involved in maintaining esterification of pectins. May be involved in the specific O-acetylation of cell wall polymers. The polypeptide is Protein trichome birefringence-like 14 (TBL14) (Arabidopsis thaliana (Mouse-ear cress)).